A 148-amino-acid chain; its full sequence is 3-dehydroquinate dehydratase (148 aa).

The active-site Proton acceptor is the Y24. Residues N80, H86, and D93 each contribute to the substrate site. Residue H106 is the Proton donor of the active site. Residues I107 to S108 and R117 contribute to the substrate site.

Belongs to the type-II 3-dehydroquinase family. As to quaternary structure, homododecamer.

The catalysed reaction is 3-dehydroquinate = 3-dehydroshikimate + H2O. It functions in the pathway metabolic intermediate biosynthesis; chorismate biosynthesis; chorismate from D-erythrose 4-phosphate and phosphoenolpyruvate: step 3/7. In terms of biological role, catalyzes a trans-dehydration via an enolate intermediate. The protein is 3-dehydroquinate dehydratase of Acidovorax sp. (strain JS42).